A 199-amino-acid chain; its full sequence is Superoxide dismutase [Mn/Fe] (199 aa).

Fe(3+) contacts are provided by His-27, His-81, Asp-161, and His-165. Positions 27, 81, 161, and 165 each coordinate Mn(2+).

It belongs to the iron/manganese superoxide dismutase family. Homodimer. Mn(2+) is required as a cofactor. Requires Fe(3+) as cofactor.

The enzyme catalyses 2 superoxide + 2 H(+) = H2O2 + O2. Its function is as follows. Destroys superoxide anion radicals which are normally produced within the cells and which are toxic to biological systems. Catalyzes the dismutation of superoxide anion radicals into O2 and H2O2 by successive reduction and oxidation of the transition metal ion at the active site. This chain is Superoxide dismutase [Mn/Fe] (sodA), found in Staphylococcus epidermidis.